Reading from the N-terminus, the 76-residue chain is Translation initiation factor IF-1 (76 aa).

An S1-like domain is found at 1–72 (MAKKDVVVMQ…NKGRIVKREK (72 aa)).

The protein belongs to the IF-1 family. Component of the 30S ribosomal translation pre-initiation complex which assembles on the 30S ribosome in the order IF-2 and IF-3, IF-1 and N-formylmethionyl-tRNA(fMet); mRNA recruitment can occur at any time during PIC assembly.

It is found in the cytoplasm. One of the essential components for the initiation of protein synthesis. Stabilizes the binding of IF-2 and IF-3 on the 30S subunit to which N-formylmethionyl-tRNA(fMet) subsequently binds. Helps modulate mRNA selection, yielding the 30S pre-initiation complex (PIC). Upon addition of the 50S ribosomal subunit IF-1, IF-2 and IF-3 are released leaving the mature 70S translation initiation complex. The chain is Translation initiation factor IF-1 from Petrotoga mobilis (strain DSM 10674 / SJ95).